Reading from the N-terminus, the 371-residue chain is Collectin-46 (371 aa).

An N-terminal signal peptide occupies residues 1-20; it reads MLLLPLSVLLLLTQPWRSLG. The segment at 43 to 215 is disordered; it reads PEGGLPGRDG…ERGAKGESGL (173 aa). One can recognise a Collagen-like domain in the interval 46–216; the sequence is GLPGRDGQDG…RGAKGESGLA (171 aa). Residues 51-65 are compositionally biased toward basic and acidic residues; it reads DGQDGREGPQGEKGD. An N-linked (GlcNAc...) asparagine glycan is attached at Asn90. Positions 113–128 are enriched in low complexity; that stretch reads PAGREGPSGKQGSMGP. A compositionally biased stretch (gly residues) spans 139 to 148; it reads GPKGGMGAPG. The span at 170-191 shows a compositional bias: low complexity; that stretch reads APGSAGVAGPAGAIGPQGPSGA. Positions 198 to 210 are enriched in basic and acidic residues; sequence KGDRGDPGERGAK. The Cell attachment site signature appears at 201–203; it reads RGD. Positions 273–371 constitute a C-type lectin domain; sequence QLCREAKGQL…SEPLLVICEF (99 aa). 2 disulfides stabilise this stretch: Cys275-Cys369 and Cys347-Cys361.

This sequence belongs to the SFTPD family. In terms of assembly, oligomeric complex of 4 set of homotrimers. Hydroxylated. Highly expressed in thymus and liver.

The protein resides in the secreted. The chain is Collectin-46 (CL46) from Bos taurus (Bovine).